The chain runs to 322 residues: 3-alpha-hydroxysteroid dehydrogenase (322 aa).

Methionine 1 is subject to Blocked amino end (Met). Residues 20–24 (GFGTT) and aspartate 50 each bind NADP(+). The Proton donor role is filled by tyrosine 55. Histidine 117 is a binding site for substrate. NADP(+) is bound by residues 166 to 167 (SN), glutamine 190, and 216 to 221 (YCTLGS). Tryptophan 227 serves as a coordination point for substrate. An NADP(+)-binding site is contributed by 270–280 (RSFNAKRIKEL).

This sequence belongs to the aldo/keto reductase family. Monomer. In brain, highest levels found in olfactory bulb. Moderate levels present in cerebellum, cerebral cortex, hypothalamus and pituitary. Low levels present in amygdala, brain stem, caudate putamen, cingulate cortex, hippocampus, midbrain, and thalamus.

The protein resides in the cytoplasm. It catalyses the reaction a 3alpha-hydroxysteroid + NADP(+) = a 3-oxosteroid + NADPH + H(+). It carries out the reaction a 3alpha-hydroxysteroid + NAD(+) = a 3-oxosteroid + NADH + H(+). Potently inhibited by the nonsteroidal anti-inflammatory drugs (NSAID). In terms of biological role, besides being a 3-alpha-hydroxysteroid dehydrogenase, the enzyme can accomplish diverse functions: as quinone reductase, as an aromatic alcohol dehydrogenase, as dihydrodiol dehydrogenase, and as 9-, 11-, and 15-hydroxyprostaglandin dehydrogenase. The polypeptide is 3-alpha-hydroxysteroid dehydrogenase (Akr1c9) (Rattus norvegicus (Rat)).